We begin with the raw amino-acid sequence, 120 residues long: Large ribosomal subunit protein uL18 (120 aa).

The segment covering 1 to 10 (MSTPRKEQTQ) has biased composition (basic and acidic residues). The segment at 1–25 (MSTPRKEQTQKRHRRLRRHLEGTPE) is disordered.

The protein belongs to the universal ribosomal protein uL18 family. As to quaternary structure, part of the 50S ribosomal subunit; part of the 5S rRNA/L5/L18/L25 subcomplex. Contacts the 5S and 23S rRNAs.

In terms of biological role, this is one of the proteins that bind and probably mediate the attachment of the 5S RNA into the large ribosomal subunit, where it forms part of the central protuberance. This Synechococcus sp. (strain RCC307) protein is Large ribosomal subunit protein uL18.